The primary structure comprises 424 residues: O-seryl-dTMP PLP-dependent decarboxylase (424 aa).

This sequence belongs to the pyridoxal-phosphate-dependent aminodecarboxylase family.

The enzyme catalyses 5-O-(L-seryl)-dTMP in DNA + H(+) = 5-aminoethoxy-methyl-dUMP in DNA + CO2. Its function is as follows. Converts 5-O-serinylthymidine (O-SerT) into 5-aminoethoxy-2'-deoxymethyluridine (5-NeOmdU) as a step in the pathway leading to thymidine hypermodifications in the viral genome. As a final result of the pathway of hypermodification, 5-NeOmdU substitutes for about 40% of the thymidines in the viral DNA. These modifications probably prevent degradation of viral genome by the host restriction-modification antiviral defense system. The protein is O-seryl-dTMP PLP-dependent decarboxylase of Salmonella phage ViI.